A 379-amino-acid chain; its full sequence is Stimulator of interferon genes protein (379 aa).

Transmembrane regions (helical) follow at residues 20–40 (VAAF…GEPS), 87–107 (ACLG…YFYV), and 115–135 (LPLT…ILLG). 2 S-palmitoyl cysteine lipidation sites follow: cysteine 88 and cysteine 91. The cyclic dinucleotide-binding domain (CBD) stretch occupies residues 153-340 (FNVAHGLAWS…KHLRQEEREE (188 aa)). 2',3'-cGAMP is bound by residues serine 162, tyrosine 167, arginine 238, and threonine 263. Residues serine 162, tyrosine 167, 238–241 (RVYT), and threonine 263 contribute to the 3',3'-c-di-GMP site. 2',3'-cUAMP-binding residues include tyrosine 167, arginine 238, and threonine 263. The C-terminal tail (CTT) stretch occupies residues 340–379 (EVTMGTAGTFVAPGSSTLHQEPELLISGMDQPLPLRTDIF). Position 355 is a phosphoserine (serine 355). A Phosphothreonine modification is found at threonine 356. Residues 363-366 (LLIS) carry the pLxIS motif motif. Serine 366 bears the Phosphoserine; by TBK1 mark.

It belongs to the STING family. In terms of assembly, homodimer; forms a homodimer in absence of cyclic nucleotide (c-di-GMP or cGAMP). Homotetramer; in presence of cyclic nucleotide (c-di-GMP or cGAMP), forms tetramers and higher-order oligomers through side-by-side packing. Interacts (when phosphorylated) with IRF3; following activation and phosphorylation on the pLxIS motif by TBK1, recruits IRF3. Interacts with TBK1; when homodimer, leading to subsequent production of IFN-beta. Interacts (via transmembrane domain) with TMEM203. Post-translationally, phosphorylation by TBK1 leads to activation and production of IFN-beta. Following cyclic nucleotide (c-di-GMP or cGAMP)-binding, activation and translocation from the endoplasmic reticulum, STING1 is phosphorylated by TBK1 at Ser-366 in the pLxIS motif. The phosphorylated pLxIS motif constitutes an IRF3-binding motif, leading to recruitment of the transcription factor IRF3 to induce type-I interferons and other cytokines. In contrast, lacks phosphorylation site at position 358, leading to reduced production of type-I interferons and other cytokines.

The protein resides in the endoplasmic reticulum membrane. Its subcellular location is the cytoplasm. It is found in the perinuclear region. The protein localises to the endoplasmic reticulum-Golgi intermediate compartment membrane. It localises to the golgi apparatus membrane. The protein resides in the cytoplasmic vesicle. Its subcellular location is the autophagosome membrane. It is found in the mitochondrion outer membrane. The protein localises to the cell membrane. The catalysed reaction is H(+)(in) = H(+)(out). Facilitator of innate immune signaling that acts as a sensor of cytosolic DNA from bacteria and viruses and promotes low production of type I interferon (IFN-alpha and IFN-beta). Compared to other mammals, STING1-dependent type I interferon induction is strongly reduced in bats, suggesting that the cGAS-STING pathway promotes a limited inflammatory response. Innate immune response is triggered in response to non-CpG double-stranded DNA from viruses and bacteria delivered to the cytoplasm. Acts by binding cyclic dinucleotides: recognizes and binds cyclic di-GMP (c-di-GMP), a second messenger produced by bacteria, cyclic UMP-AMP (2',3'-cUAMP), and cyclic GMP-AMP (cGAMP), a messenger produced by CGAS in response to DNA virus in the cytosol. Upon binding to c-di-GMP, cUAMP or cGAMP, STING1 oligomerizes, translocates from the endoplasmic reticulum and is phosphorylated by TBK1 on the pLxIS motif, leading to recruitment and subsequent activation of the transcription factor IRF3 to induce expression of type I interferon and exert a potent anti-viral state. In addition to promote the production of type I interferons, plays a direct role in autophagy. Following cGAMP-binding, STING1 buds from the endoplasmic reticulum into COPII vesicles, which then form the endoplasmic reticulum-Golgi intermediate compartment (ERGIC). The ERGIC serves as the membrane source for WIPI2 recruitment and LC3 lipidation, leading to formation of autophagosomes that target cytosolic DNA or DNA viruses for degradation by the lysosome. Promotes autophagy by acting as a proton channel that directs proton efflux from the Golgi to facilitate MAP1LC3B/LC3B lipidation. The autophagy- and interferon-inducing activities can be uncoupled and autophagy induction is independent of TBK1 phosphorylation. The polypeptide is Stimulator of interferon genes protein (Eidolon helvum (Straw-colored fruit bat)).